Consider the following 56-residue polypeptide: Alpha-conotoxin EpI (56 aa).

The N-terminal stretch at 1–16 is a signal peptide; that stretch reads MFTVFLLVVLATTVVS. The propeptide occupies 17–39; it reads FTSDRASDSRKDAASGLIALTIK. Intrachain disulfides connect Cys41-Cys47 and Cys42-Cys55. The ser-Xaa-Pro motif, crucial for potent interaction with nAChR stretch occupies residues 43-45; the sequence is SDP. A Sulfotyrosine modification is found at Tyr54. Cysteine amide is present on Cys55.

It belongs to the conotoxin A superfamily. In terms of processing, both tyrosine sulfation and C-terminal amidation are important for activity and structure stability. As to expression, expressed by the venom duct.

It localises to the secreted. Functionally, alpha-conotoxins act on postsynaptic membranes, they bind to the nicotinic acetylcholine receptors (nAChR) and thus inhibit them. This native peptide blocks mammalian nicotinic acetylcholine receptors composed of alpha-3-beta-2/CHRNA3-CHRNB2 and alpha-3-beta-4/CHRNA3-CHRNB4 subunits. This chain is Alpha-conotoxin EpI, found in Conus episcopatus (Bishop's cone).